A 319-amino-acid polypeptide reads, in one-letter code: MDLLTLEGWLDNTAFAVLFLTMLLYWCGAAFPQWPLLTAAGRTGMAIANLCITGLLAARWIEGGYFPISNLYESLFFLCWGLTAMHFVAESISGQPLVGVVTAPVAMGITAFAALSLPPEMQQSAPLVPALKSNWLMMHVSVMMLSYATLMVGSLLAIALLVVTWGQPVNLKGSSVGTGSFRSRRPEPSLEASTGNGGTTVLTPPALQLSLQRLTLAETLDNLSYRMIGLGFPLLTIGIISGAVWANEAWGAPWSWDPKETWALIVWLVYAAYLHARMTRDWQGRKPAILATVGFGVVWVCYLGVNLLGKGLHSYGWFF.

5 consecutive transmembrane segments (helical) span residues 14–34 (AFAVLFLTMLLYWCGAAFPQW), 46–66 (AIANLCITGLLAARWIEGGYF), 74–94 (SLFFLCWGLTAMHFVAESISG), 97–117 (LVGVVTAPVAMGITAFAALSL), and 142–162 (VMMLSYATLMVGSLLAIALLV). The interval 175 to 201 (SVGTGSFRSRRPEPSLEASTGNGGTTV) is disordered. The segment covering 191 to 201 (EASTGNGGTTV) has biased composition (polar residues). Helical transmembrane passes span 227–247 (MIGLGFPLLTIGIISGAVWAN), 254–274 (WSWDPKETWALIVWLVYAAYL), and 288–308 (AILATVGFGVVWVCYLGVNLL).

It belongs to the CcmF/CycK/Ccl1/NrfE/CcsA family. As to quaternary structure, may interact with ccs1.

The protein resides in the cellular thylakoid membrane. In terms of biological role, required during biogenesis of c-type cytochromes (cytochrome c6 and cytochrome f) at the step of heme attachment. The chain is Cytochrome c biogenesis protein CcsA from Thermosynechococcus vestitus (strain NIES-2133 / IAM M-273 / BP-1).